The sequence spans 948 residues: Probable disease resistance protein At5g47260 (948 aa).

A coiled-coil region spans residues 20 to 57 (RKYLYNLERNLEALHKVMQDLNAMRNDLLKRLSKEEEI). An NB-ARC domain is found at 134 to 432 (HRALPPLVIK…CEGILAKEDR (299 aa)). 176 to 183 (GRGGVGKT) serves as a coordination point for ATP. 9 LRR repeats span residues 498–519 (MIRRMSVTSTQIQNISDSPQCS), 520–542 (ELTTLVFRRNRHLKWISGAFFQW), 545–567 (GLVVLDLSFNRELAELPEEVSSL), 569–591 (LLRFLNLSWTCIKGLPLGLKELK), 592–614 (SLIHLDLDYTSNLQEVDVIASLL), 615–636 (NLQVLRLFHSVSMDLKLMEDIQ), 640–661 (SLKELSLTVRGSSVLQRLLSIQ), 666–686 (SIRRLHLTETTIVDGGILSLN), and 690–711 (SLCELDILGCNILEITIDWRCT).

This sequence belongs to the disease resistance NB-LRR family.

In terms of biological role, potential disease resistance protein. The protein is Probable disease resistance protein At5g47260 of Arabidopsis thaliana (Mouse-ear cress).